We begin with the raw amino-acid sequence, 101 residues long: Small ribosomal subunit protein uS14 (101 aa).

The protein belongs to the universal ribosomal protein uS14 family. Part of the 30S ribosomal subunit. Contacts proteins S3 and S10.

Its function is as follows. Binds 16S rRNA, required for the assembly of 30S particles and may also be responsible for determining the conformation of the 16S rRNA at the A site. The polypeptide is Small ribosomal subunit protein uS14 (Ehrlichia ruminantium (strain Welgevonden)).